The following is a 289-amino-acid chain: 2,3-dimethylmalate lyase (289 aa).

The protein belongs to the isocitrate lyase/PEP mutase superfamily. Homotetramer. Mg(2+) serves as cofactor.

It carries out the reaction (2R,3S)-2,3-dimethylmalate = propanoate + pyruvate. The protein operates within cofactor degradation; nicotinate degradation; propanoate and pyruvate from 6-hydroxynicotinate: step 8/8. Completely inhibited by propionic anhydride and by cystamine. Irreversibly inhibited by the mercapto reagents iodoacetate and iodoacetamide. Unaffected by hydroxylamine. Its function is as follows. Catalyzes the formation of proponate and pyruvate from (2R,3S)-2,3-dimethylmalate. Has no activity toward dimethylmaleate, malate, citramalate, isocitrate and citrate. In Eubacterium barkeri (Clostridium barkeri), this protein is 2,3-dimethylmalate lyase.